The chain runs to 160 residues: Lipoprotein signal peptidase (160 aa).

2 helical membrane-spanning segments follow: residues 60 to 80 (TEWL…AFFL) and 84 to 104 (LPFL…AGTI). Catalysis depends on residues Asp118 and Asp132. A helical membrane pass occupies residues 127-147 (TFNMADSCLTLGIIWLVLLYL).

It belongs to the peptidase A8 family.

Its subcellular location is the cell membrane. It catalyses the reaction Release of signal peptides from bacterial membrane prolipoproteins. Hydrolyzes -Xaa-Yaa-Zaa-|-(S,diacylglyceryl)Cys-, in which Xaa is hydrophobic (preferably Leu), and Yaa (Ala or Ser) and Zaa (Gly or Ala) have small, neutral side chains.. The protein operates within protein modification; lipoprotein biosynthesis (signal peptide cleavage). In terms of biological role, this protein specifically catalyzes the removal of signal peptides from prolipoproteins. This chain is Lipoprotein signal peptidase, found in Dehalococcoides mccartyi (strain ATCC BAA-2266 / KCTC 15142 / 195) (Dehalococcoides ethenogenes (strain 195)).